Here is a 673-residue protein sequence, read N- to C-terminus: DNA ligase (673 aa).

NAD(+)-binding positions include 36 to 40, 85 to 86, and E116; these read DAEYD and SL. The N6-AMP-lysine intermediate role is filled by K118. NAD(+) is bound by residues R139, E176, K291, and K315. Zn(2+)-binding residues include C409, C412, C427, and C433. Positions 592 to 673 constitute a BRCT domain; sequence RGEQPLAGRT…LQALLQEHGR (82 aa).

It belongs to the NAD-dependent DNA ligase family. LigA subfamily. The cofactor is Mg(2+). It depends on Mn(2+) as a cofactor.

It carries out the reaction NAD(+) + (deoxyribonucleotide)n-3'-hydroxyl + 5'-phospho-(deoxyribonucleotide)m = (deoxyribonucleotide)n+m + AMP + beta-nicotinamide D-nucleotide.. In terms of biological role, DNA ligase that catalyzes the formation of phosphodiester linkages between 5'-phosphoryl and 3'-hydroxyl groups in double-stranded DNA using NAD as a coenzyme and as the energy source for the reaction. It is essential for DNA replication and repair of damaged DNA. The sequence is that of DNA ligase from Alkalilimnicola ehrlichii (strain ATCC BAA-1101 / DSM 17681 / MLHE-1).